Reading from the N-terminus, the 336-residue chain is Fructose-1,6-bisphosphatase class 1 (336 aa).

Mg(2+)-binding residues include Glu90, Asp112, Leu114, and Asp115. Residues 115–118 (DGSS), Asn207, and Lys273 each bind substrate. Glu279 is a Mg(2+) binding site.

The protein belongs to the FBPase class 1 family. As to quaternary structure, homotetramer. Mg(2+) is required as a cofactor.

Its subcellular location is the cytoplasm. The enzyme catalyses beta-D-fructose 1,6-bisphosphate + H2O = beta-D-fructose 6-phosphate + phosphate. It functions in the pathway carbohydrate biosynthesis; gluconeogenesis. This Xanthomonas axonopodis pv. citri (strain 306) protein is Fructose-1,6-bisphosphatase class 1.